The primary structure comprises 953 residues: Kinesin-like protein KIF23 (953 aa).

Positions 7–11 match the Nuclear localization signal motif; sequence KTVRK. The region spanning 25–436 is the Kinesin motor domain; that stretch reads PVGVYCRVRP…MRFAEVTQEV (412 aa). Residue 112-119 participates in ATP binding; the sequence is GVTGSGKT. Phosphoserine occurs at positions 155 and 160. Residues 542–618 adopt a coiled-coil conformation; it reads QEKLNEREKV…RRLEARLQGM (77 aa). Residues K572 and K587 each participate in a glycyl lysine isopeptide (Lys-Gly) (interchain with G-Cter in SUMO2) cross-link. S606 carries the phosphoserine modification. Residues K625, K648, K663, and K666 each participate in a glycyl lysine isopeptide (Lys-Gly) (interchain with G-Cter in SUMO2) cross-link. The segment at 658 to 695 is disordered; the sequence is IVTEPKPEKPERPSRERDREKIIPRSVSPSPLPLSSNN. The segment covering 662–680 has biased composition (basic and acidic residues); that stretch reads PKPEKPERPSRERDREKII. A compositionally biased stretch (low complexity) spans 681–693; sequence PRSVSPSPLPLSS. 2 positions are modified to phosphoserine: S683 and S685. The residue at position 739 (T739) is a Phosphothreonine. The residue at position 807 (S807) is a Phosphoserine. Residues K816 and K847 each participate in a glycyl lysine isopeptide (Lys-Gly) (interchain with G-Cter in SUMO2) cross-link. Phosphoserine is present on S860. Residues K867, K870, and K892 each participate in a glycyl lysine isopeptide (Lys-Gly) (interchain with G-Cter in SUMO2) cross-link. Disordered stretches follow at residues 894–921 and 934–953; these read ELPT…EWTD and AGSQ…RKKP. Position 904 is a phosphoserine (S904). T920 bears the Phosphothreonine mark. K949 participates in a covalent cross-link: Glycyl lysine isopeptide (Lys-Gly) (interchain with G-Cter in SUMO2).

This sequence belongs to the TRAFAC class myosin-kinesin ATPase superfamily. Kinesin family. In terms of assembly, heterotetramer of two molecules each of RACGAP1 and KIF23. Found in the centralspindlin complex. Interacts with RACGAP1; the interaction is direct. Interacts with ECT2 and PRC1. Interacts with ANXA11 during cytokinesis. Interacts with BIRC6/bruce and USP8/UBPY. Interacts with ARF6, forming heterodimers and heterotetramers. In terms of processing, ubiquitinated. Deubiquitinated by USP8/UBPY. In terms of tissue distribution, detected in testis and ovary from newborn mice (at protein level). Detected in brain, spinal cord and small intestine.

It is found in the nucleus. Its subcellular location is the cytoplasm. It localises to the cytoskeleton. The protein localises to the spindle. The protein resides in the midbody. It is found in the midbody ring. Functionally, component of the centralspindlin complex that serves as a microtubule-dependent and Rho-mediated signaling required for the myosin contractile ring formation during the cell cycle cytokinesis. Essential for cytokinesis in Rho-mediated signaling. Required for the localization of ECT2 to the central spindle. Plus-end-directed motor enzyme that moves antiparallel microtubules in vitro. The polypeptide is Kinesin-like protein KIF23 (Kif23) (Mus musculus (Mouse)).